Here is a 236-residue protein sequence, read N- to C-terminus: Probable transcriptional activator protein TraR (236 aa).

The HTH luxR-type domain maps to V169–G234. The segment at residues A193–D212 is a DNA-binding region (H-T-H motif).

Belongs to the autoinducer-regulated transcriptional regulatory protein family.

Functionally, positive regulation of conjugal transfer. TraR activates target genes in the presence of AAI and also activates traR and traI themselves. The sequence is that of Probable transcriptional activator protein TraR (traR) from Sinorhizobium fredii (strain NBRC 101917 / NGR234).